A 306-amino-acid chain; its full sequence is Dihydroorotate dehydrogenase B (NAD(+)), catalytic subunit (306 aa).

FMN contacts are provided by residues serine 24 and 48 to 49 (KA). Substrate contacts are provided by residues lysine 48 and 72–76 (NAIGL). FMN is bound by residues asparagine 102 and asparagine 130. Asparagine 130 is a substrate binding site. Residue cysteine 133 is the Nucleophile of the active site. Residues lysine 168 and isoleucine 194 each coordinate FMN. 195–196 (NT) contacts substrate. Residues glycine 220, 246 to 247 (GG), and 268 to 269 (GT) contribute to the FMN site.

Belongs to the dihydroorotate dehydrogenase family. Type 1 subfamily. In terms of assembly, heterotetramer of 2 PyrK and 2 PyrD type B subunits. The cofactor is FMN.

The protein localises to the cytoplasm. The enzyme catalyses (S)-dihydroorotate + NAD(+) = orotate + NADH + H(+). Its pathway is pyrimidine metabolism; UMP biosynthesis via de novo pathway; orotate from (S)-dihydroorotate (NAD(+) route): step 1/1. In terms of biological role, catalyzes the conversion of dihydroorotate to orotate with NAD(+) as electron acceptor. In Malacoplasma penetrans (strain HF-2) (Mycoplasma penetrans), this protein is Dihydroorotate dehydrogenase B (NAD(+)), catalytic subunit (pyrD).